Reading from the N-terminus, the 1074-residue chain is Carbamoyl phosphate synthase large chain (1074 aa).

The interval Met-1–Asp-399 is carboxyphosphate synthetic domain. 12 residues coordinate ATP: Arg-129, Arg-169, Gly-175, Gly-176, Glu-208, Val-210, Glu-215, Gly-241, Ile-242, His-243, Gln-284, and Glu-296. In terms of domain architecture, ATP-grasp 1 spans Lys-133 to Ile-325. Mg(2+) contacts are provided by Gln-284, Glu-296, and Asn-298. Mn(2+) is bound by residues Gln-284, Glu-296, and Asn-298. The interval Ile-400 to Leu-543 is oligomerization domain. The interval Asn-544–Asn-933 is carbamoyl phosphate synthetic domain. In terms of domain architecture, ATP-grasp 2 spans Asn-674 to Ala-865. Positions 710, 749, 751, 756, 781, 782, 783, 784, 824, and 836 each coordinate ATP. Positions 824, 836, and 838 each coordinate Mg(2+). The Mn(2+) site is built by Gln-824, Glu-836, and Asn-838. An MGS-like domain is found at Asn-932–Leu-1074. Residues Leu-934 to Leu-1074 are allosteric domain.

Belongs to the CarB family. In terms of assembly, composed of two chains; the small (or glutamine) chain promotes the hydrolysis of glutamine to ammonia, which is used by the large (or ammonia) chain to synthesize carbamoyl phosphate. Tetramer of heterodimers (alpha,beta)4. It depends on Mg(2+) as a cofactor. The cofactor is Mn(2+).

It carries out the reaction hydrogencarbonate + L-glutamine + 2 ATP + H2O = carbamoyl phosphate + L-glutamate + 2 ADP + phosphate + 2 H(+). It catalyses the reaction hydrogencarbonate + NH4(+) + 2 ATP = carbamoyl phosphate + 2 ADP + phosphate + 2 H(+). The protein operates within amino-acid biosynthesis; L-arginine biosynthesis; carbamoyl phosphate from bicarbonate: step 1/1. It participates in pyrimidine metabolism; UMP biosynthesis via de novo pathway; (S)-dihydroorotate from bicarbonate: step 1/3. Functionally, large subunit of the glutamine-dependent carbamoyl phosphate synthetase (CPSase). CPSase catalyzes the formation of carbamoyl phosphate from the ammonia moiety of glutamine, carbonate, and phosphate donated by ATP, constituting the first step of 2 biosynthetic pathways, one leading to arginine and/or urea and the other to pyrimidine nucleotides. The large subunit (synthetase) binds the substrates ammonia (free or transferred from glutamine from the small subunit), hydrogencarbonate and ATP and carries out an ATP-coupled ligase reaction, activating hydrogencarbonate by forming carboxy phosphate which reacts with ammonia to form carbamoyl phosphate. The protein is Carbamoyl phosphate synthase large chain of Methanothrix thermoacetophila (strain DSM 6194 / JCM 14653 / NBRC 101360 / PT) (Methanosaeta thermophila).